The sequence spans 237 residues: 7-cyano-7-deazaguanine synthase (237 aa).

Position 10–20 (10–20) interacts with ATP; the sequence is FSGGQDSTTCL. The Zn(2+) site is built by Cys189, Cys198, Cys201, and Cys204.

It belongs to the QueC family. Zn(2+) serves as cofactor.

The enzyme catalyses 7-carboxy-7-deazaguanine + NH4(+) + ATP = 7-cyano-7-deazaguanine + ADP + phosphate + H2O + H(+). It participates in purine metabolism; 7-cyano-7-deazaguanine biosynthesis. Its function is as follows. Catalyzes the ATP-dependent conversion of 7-carboxy-7-deazaguanine (CDG) to 7-cyano-7-deazaguanine (preQ(0)). In Aeromonas salmonicida (strain A449), this protein is 7-cyano-7-deazaguanine synthase.